Here is a 343-residue protein sequence, read N- to C-terminus: MGDCSIFTYTDNDFIGKVCCSGQQNRGRSRFDIALRSGWTEKRNTGLFRYRLDELETRILPGSRGYIAQLNIMRGTERRKPQEILSVRQNFDPKQFNFNKINPKELLFELKRESERKCSVIINVSPLEFGHCLLVPEPEKCFPQVLTHLAVQTGIETVLLSADPGFRVGFNSLGGFASVNHLHLHGYYLNHRLKIESSPAKLVLPNLNLYELVDFPSGFLFYTQGPNLDLVVKAICSLTDVLVDHNIAHNLFLTRGCPPQMEPDTSSSRNGVRVIVWPRLSCFGAKEESAFNVALCELAGHLPFKNRQDYESATEETVQDIIQKYLLPQEETAQLKEHLMKCL.

H183 serves as the catalytic Tele-GMP-histidine intermediate.

Belongs to the GDPGP1 family.

Its subcellular location is the cytoplasm. It carries out the reaction GDP-alpha-D-glucose + phosphate = alpha-D-glucose 1-phosphate + GDP + H(+). In terms of biological role, specific and highly efficient GDP-D-glucose phosphorylase regulating the levels of GDP-D-glucose in cells. In Danio rerio (Zebrafish), this protein is GDP-D-glucose phosphorylase 1 (gdpgp1).